Reading from the N-terminus, the 231-residue chain is uncharacterized protein (231 aa).

The helical transmembrane segment at Leu-86–Pro-106 threads the bilayer.

The protein localises to the membrane. This is an uncharacterized protein from Methanocaldococcus jannaschii (strain ATCC 43067 / DSM 2661 / JAL-1 / JCM 10045 / NBRC 100440) (Methanococcus jannaschii).